Here is a 149-residue protein sequence, read N- to C-terminus: D-aminoacyl-tRNA deacylase (149 aa).

Residues 139-140 (GP) carry the Gly-cisPro motif, important for rejection of L-amino acids motif.

Belongs to the DTD family. As to quaternary structure, homodimer.

Its subcellular location is the cytoplasm. It catalyses the reaction glycyl-tRNA(Ala) + H2O = tRNA(Ala) + glycine + H(+). The enzyme catalyses a D-aminoacyl-tRNA + H2O = a tRNA + a D-alpha-amino acid + H(+). In terms of biological role, an aminoacyl-tRNA editing enzyme that deacylates mischarged D-aminoacyl-tRNAs. Also deacylates mischarged glycyl-tRNA(Ala), protecting cells against glycine mischarging by AlaRS. Acts via tRNA-based rather than protein-based catalysis; rejects L-amino acids rather than detecting D-amino acids in the active site. By recycling D-aminoacyl-tRNA to D-amino acids and free tRNA molecules, this enzyme counteracts the toxicity associated with the formation of D-aminoacyl-tRNA entities in vivo and helps enforce protein L-homochirality. This Candida glabrata (strain ATCC 2001 / BCRC 20586 / JCM 3761 / NBRC 0622 / NRRL Y-65 / CBS 138) (Yeast) protein is D-aminoacyl-tRNA deacylase (DTD1).